Consider the following 495-residue polypeptide: Aspartyl/glutamyl-tRNA(Asn/Gln) amidotransferase subunit B (495 aa).

It belongs to the GatB/GatE family. GatB subfamily. In terms of assembly, heterotrimer of A, B and C subunits.

It carries out the reaction L-glutamyl-tRNA(Gln) + L-glutamine + ATP + H2O = L-glutaminyl-tRNA(Gln) + L-glutamate + ADP + phosphate + H(+). The enzyme catalyses L-aspartyl-tRNA(Asn) + L-glutamine + ATP + H2O = L-asparaginyl-tRNA(Asn) + L-glutamate + ADP + phosphate + 2 H(+). Its function is as follows. Allows the formation of correctly charged Asn-tRNA(Asn) or Gln-tRNA(Gln) through the transamidation of misacylated Asp-tRNA(Asn) or Glu-tRNA(Gln) in organisms which lack either or both of asparaginyl-tRNA or glutaminyl-tRNA synthetases. The reaction takes place in the presence of glutamine and ATP through an activated phospho-Asp-tRNA(Asn) or phospho-Glu-tRNA(Gln). The chain is Aspartyl/glutamyl-tRNA(Asn/Gln) amidotransferase subunit B from Acinetobacter baylyi (strain ATCC 33305 / BD413 / ADP1).